A 1141-amino-acid polypeptide reads, in one-letter code: Putative late blight resistance protein homolog R1B-13 (1141 aa).

A coiled-coil region spans residues 417 to 437 (DSLAFLKNQIQVIQMEFEILQ). One can recognise an NB-ARC domain in the interval 516-742 (TVITHTSSQL…LSIVLVADVL (227 aa)). 5 LRR repeats span residues 826–851 (FKFLKVLDLEHQVVIDFIPTELPYLR), 869–894 (LWNLETLILKGTSAKTLLLPSTVWDM), 992–1016 (APNLKYLKLSGYYLDSQYLSETVDH), 1017–1041 (LKHLEVLKLYNVEFGDYREWEVSNG), and 1043–1068 (FPQLKILKLENLSLMKWIVADDAFPI).

The protein belongs to the disease resistance NB-LRR family.

Its subcellular location is the cytoplasm. It localises to the membrane. Its function is as follows. Confers resistance to late blight (Phytophthora infestans) races carrying the avirulence gene Avr1. Resistance proteins guard the plant against pathogens that contain an appropriate avirulence protein via an indirect interaction with this avirulence protein. That triggers a defense system including the hypersensitive response, which restricts the pathogen growth. This Solanum demissum (Wild potato) protein is Putative late blight resistance protein homolog R1B-13 (R1B-13).